A 500-amino-acid chain; its full sequence is NAD(P)H-quinone oxidoreductase chain 4, chloroplastic (500 aa).

14 helical membrane passes run 4–24 (FPWL…IFFL), 37–57 (ICIC…HFQL), 87–107 (IGPI…AWPI), 113–130 (LFHF…GSFS), 134–154 (LLLF…LLAM), 167–187 (FILY…GVAL), 208–228 (VLEI…LPII), 242–262 (HYST…YGLI), 272–292 (AHSI…IYAA), 305–325 (IAYS…SLTD), 330–350 (GALL…FLAG), 386–406 (LALP…GIIT), 411–431 (VLIP…LTPI), and 462–482 (LFLS…PDFV).

The protein belongs to the complex I subunit 4 family.

It is found in the plastid. The protein resides in the chloroplast thylakoid membrane. The catalysed reaction is a plastoquinone + NADH + (n+1) H(+)(in) = a plastoquinol + NAD(+) + n H(+)(out). It catalyses the reaction a plastoquinone + NADPH + (n+1) H(+)(in) = a plastoquinol + NADP(+) + n H(+)(out). The chain is NAD(P)H-quinone oxidoreductase chain 4, chloroplastic from Atropa belladonna (Belladonna).